The sequence spans 85 residues: Protein RnfH (85 aa).

Belongs to the UPF0125 (RnfH) family.

The protein is Protein RnfH of Cereibacter sphaeroides (strain ATCC 17023 / DSM 158 / JCM 6121 / CCUG 31486 / LMG 2827 / NBRC 12203 / NCIMB 8253 / ATH 2.4.1.) (Rhodobacter sphaeroides).